The following is a 353-amino-acid chain: Quinolinate synthase (353 aa).

Residues His47 and Ser68 each coordinate iminosuccinate. Cys113 serves as a coordination point for [4Fe-4S] cluster. Iminosuccinate contacts are provided by residues 139–141 (YAN) and Ser156. Cys200 is a binding site for [4Fe-4S] cluster. Residues 226–228 (HPE) and Thr243 contribute to the iminosuccinate site. Residue Cys297 participates in [4Fe-4S] cluster binding.

Belongs to the quinolinate synthase family. Type 1 subfamily. The cofactor is [4Fe-4S] cluster.

The protein localises to the cytoplasm. It catalyses the reaction iminosuccinate + dihydroxyacetone phosphate = quinolinate + phosphate + 2 H2O + H(+). It functions in the pathway cofactor biosynthesis; NAD(+) biosynthesis; quinolinate from iminoaspartate: step 1/1. Its function is as follows. Catalyzes the condensation of iminoaspartate with dihydroxyacetone phosphate to form quinolinate. The chain is Quinolinate synthase from Pectobacterium carotovorum subsp. carotovorum (strain PC1).